The primary structure comprises 580 residues: Glutamyl-tRNA(Gln) amidotransferase subunit B-2, chloroplastic/mitochondrial (580 aa).

Low complexity-rich tracts occupy residues 20-35 (RRDA…ATVS) and 42-59 (AVST…SAAV). The tract at residues 20–64 (RRDATAAASTSAATVSRGRRARAVSTTTTTSSSSSSSAAVDARDA) is disordered.

The protein belongs to the GatB/GatE family. GatB subfamily. Subunit of the heterotrimeric GatCAB amidotransferase (AdT) complex, composed of A, B and C subunits.

It is found in the mitochondrion. The protein resides in the plastid. The protein localises to the chloroplast. The enzyme catalyses L-glutamyl-tRNA(Gln) + L-glutamine + ATP + H2O = L-glutaminyl-tRNA(Gln) + L-glutamate + ADP + phosphate + H(+). Functionally, allows the formation of correctly charged Gln-tRNA(Gln) through the transamidation of misacylated Glu-tRNA(Gln) in chloroplasts and mitochondria. The reaction takes place in the presence of glutamine and ATP through an activated gamma-phospho-Glu-tRNA(Gln). In Micromonas pusilla (strain CCMP1545) (Picoplanktonic green alga), this protein is Glutamyl-tRNA(Gln) amidotransferase subunit B-2, chloroplastic/mitochondrial.